We begin with the raw amino-acid sequence, 311 residues long: T-cell acute lymphocytic leukemia protein 1 homolog (311 aa).

Residues M1–S14 show a composition bias toward pro residues. Residues M1 to A67 form a disordered region. The span at D15 to E25 shows a compositional bias: basic and acidic residues. The bHLH domain maps to V179 to L231. The segment at S265 to R311 is disordered. Residues T284–H294 show a composition bias toward basic and acidic residues.

Efficient DNA binding requires dimerization with another bHLH protein. Forms heterodimers with TCF3. Post-translationally, phosphorylated on serine residues.

It localises to the nucleus. In terms of biological role, implicated in the genesis of hemopoietic malignancies. It may play an important role in hemopoietic differentiation. In Gallus gallus (Chicken), this protein is T-cell acute lymphocytic leukemia protein 1 homolog (TAL1).